The following is a 199-amino-acid chain: MHGDPQQLELLRVARIGRAQGLKGEVTVRLYTDDPEWRFEPDSVLYSQDGETEYIVEGSRTFKDRWILKLEGVDDRNAAEALNGVELYGEADDAEDMLEADEWYPKDLIGLEARLVEGNGLGLPAGQVVGKVVDVVDSPAQSLLKIRLTEPVVTGQNSKGEDVVEKTALVPFVEALVPDIDLEEQYLTLDPPGGLIPGL.

The PRC barrel domain occupies 100 to 195; that stretch reads ADEWYPKDLI…YLTLDPPGGL (96 aa).

The protein belongs to the RimM family. Binds ribosomal protein uS19.

Its subcellular location is the cytoplasm. An accessory protein needed during the final step in the assembly of 30S ribosomal subunit, possibly for assembly of the head region. Essential for efficient processing of 16S rRNA. May be needed both before and after RbfA during the maturation of 16S rRNA. It has affinity for free ribosomal 30S subunits but not for 70S ribosomes. The sequence is that of Ribosome maturation factor RimM from Bifidobacterium longum (strain DJO10A).